A 223-amino-acid chain; its full sequence is Urease accessory protein UreF (223 aa).

It belongs to the UreF family. In terms of assembly, ureD, UreF and UreG form a complex that acts as a GTP-hydrolysis-dependent molecular chaperone, activating the urease apoprotein by helping to assemble the nickel containing metallocenter of UreC. The UreE protein probably delivers the nickel.

The protein resides in the cytoplasm. In terms of biological role, required for maturation of urease via the functional incorporation of the urease nickel metallocenter. This is Urease accessory protein UreF from Paenarthrobacter aurescens (strain TC1).